We begin with the raw amino-acid sequence, 89 residues long: MAISQQRKDELIKEYRVHETDTGSPEVQIAVLTAEITALNEHLREHKKDHHSRRGLLKMVGRRRHLLNYLRSKDIQRYRELIKSLGIRR.

It belongs to the universal ribosomal protein uS15 family. In terms of assembly, part of the 30S ribosomal subunit. Forms a bridge to the 50S subunit in the 70S ribosome, contacting the 23S rRNA.

In terms of biological role, one of the primary rRNA binding proteins, it binds directly to 16S rRNA where it helps nucleate assembly of the platform of the 30S subunit by binding and bridging several RNA helices of the 16S rRNA. Its function is as follows. Forms an intersubunit bridge (bridge B4) with the 23S rRNA of the 50S subunit in the ribosome. This chain is Small ribosomal subunit protein uS15, found in Staphylococcus epidermidis (strain ATCC 12228 / FDA PCI 1200).